A 222-amino-acid polypeptide reads, in one-letter code: Phosphoribosylformylglycinamidine synthase subunit PurQ (222 aa).

The Glutamine amidotransferase type-1 domain maps to 3–222 (AAVVVFPGSN…RALSGLLTDA (220 aa)). The active-site Nucleophile is Cys-86. Catalysis depends on residues His-194 and Glu-196.

As to quaternary structure, part of the FGAM synthase complex composed of 1 PurL, 1 PurQ and 2 PurS subunits.

It localises to the cytoplasm. It carries out the reaction N(2)-formyl-N(1)-(5-phospho-beta-D-ribosyl)glycinamide + L-glutamine + ATP + H2O = 2-formamido-N(1)-(5-O-phospho-beta-D-ribosyl)acetamidine + L-glutamate + ADP + phosphate + H(+). The enzyme catalyses L-glutamine + H2O = L-glutamate + NH4(+). The protein operates within purine metabolism; IMP biosynthesis via de novo pathway; 5-amino-1-(5-phospho-D-ribosyl)imidazole from N(2)-formyl-N(1)-(5-phospho-D-ribosyl)glycinamide: step 1/2. In terms of biological role, part of the phosphoribosylformylglycinamidine synthase complex involved in the purines biosynthetic pathway. Catalyzes the ATP-dependent conversion of formylglycinamide ribonucleotide (FGAR) and glutamine to yield formylglycinamidine ribonucleotide (FGAM) and glutamate. The FGAM synthase complex is composed of three subunits. PurQ produces an ammonia molecule by converting glutamine to glutamate. PurL transfers the ammonia molecule to FGAR to form FGAM in an ATP-dependent manner. PurS interacts with PurQ and PurL and is thought to assist in the transfer of the ammonia molecule from PurQ to PurL. This Ruegeria sp. (strain TM1040) (Silicibacter sp.) protein is Phosphoribosylformylglycinamidine synthase subunit PurQ.